The sequence spans 409 residues: MAREKFERKKQHVNIGTIGHVDHGKTTLTAAITMCLQSFSKNKGKRYDEIDSAPEEKARGITINTAHVEYETENRHYAHVDCPGHADYVKNMITGAAQMDGAILVVSGADGPMPQTKEHLLLAKQVGVPTLVVFLNKEDQVDDPELLELVELEVRETLDKYEYPGDDIPIIAGSALLALEALIENPNVKPGENEWVDKILKLMQNVDTYIPTPVRETDKTFLMAVEDVFSITGRGTVATGLVERGTLKTGATVEIIGLRDTTTTTVTGLEMFQKTLDETVAGDNVGVLLRGVQKDNIQRGMVLAAPGTIKPHTKFEAQVYILTKEEGGRHTPFFPGYRPQFYVRTTDVTGKIESFTADDGSEALMATSGDRLKMVVELIQPIAVENGMRFAIREGGRTVGAGVVSTILK.

The tr-type G domain occupies 10–214 (KQHVNIGTIG…NVDTYIPTPV (205 aa)). The interval 19–26 (GHVDHGKT) is G1. A GTP-binding site is contributed by 19–26 (GHVDHGKT). Thr26 contacts Mg(2+). Positions 60–64 (GITIN) are G2. A G3 region spans residues 81-84 (DCPG). GTP contacts are provided by residues 81–85 (DCPGH) and 136–139 (NKED). The segment at 136–139 (NKED) is G4. Residues 174–176 (SAL) are G5.

The protein belongs to the TRAFAC class translation factor GTPase superfamily. Classic translation factor GTPase family. EF-Tu/EF-1A subfamily.

The protein resides in the plastid. The protein localises to the chloroplast. It carries out the reaction GTP + H2O = GDP + phosphate + H(+). In terms of biological role, GTP hydrolase that promotes the GTP-dependent binding of aminoacyl-tRNA to the A-site of ribosomes during protein biosynthesis. The chain is Elongation factor Tu, chloroplastic (tufA) from Tupiella akineta (Green alga).